Consider the following 259-residue polypeptide: Flap endonuclease Xni (259 aa).

Aspartate 109 is a Mg(2+) binding site. The region spanning 165–255 (VTPAQLTDYW…FNLQDIRFNS (91 aa)) is the 5'-3' exonuclease domain. K(+) contacts are provided by leucine 176, proline 185, valine 187, and isoleucine 190. Positions 189 to 194 (GIGPKA) are interaction with DNA.

This sequence belongs to the Xni family. Mg(2+) is required as a cofactor. Requires K(+) as cofactor.

Has flap endonuclease activity. During DNA replication, flap endonucleases cleave the 5'-overhanging flap structure that is generated by displacement synthesis when DNA polymerase encounters the 5'-end of a downstream Okazaki fragment. This Vibrio cholerae serotype O1 (strain ATCC 39315 / El Tor Inaba N16961) protein is Flap endonuclease Xni.